The chain runs to 378 residues: Ribosomal RNA large subunit methyltransferase G (378 aa).

This sequence belongs to the methyltransferase superfamily. RlmG family.

Its subcellular location is the cytoplasm. The catalysed reaction is guanosine(1835) in 23S rRNA + S-adenosyl-L-methionine = N(2)-methylguanosine(1835) in 23S rRNA + S-adenosyl-L-homocysteine + H(+). In terms of biological role, specifically methylates the guanine in position 1835 (m2G1835) of 23S rRNA. The sequence is that of Ribosomal RNA large subunit methyltransferase G from Escherichia coli O9:H4 (strain HS).